Reading from the N-terminus, the 275-residue chain is MKKWIAGLLALIAISPVMAATPWQQITHPVAGSPQAIGGFANGCVIGAMPLPLESADYQVMRPDQRRYFGHPDLLNFIHRLSDKAQKNQLGTVLIGDMAMPAGGRFSSGHASHQSGLDVDIWLQLPKQRWSQQQLLKPQPIDLVAADGKRVVPALWQPQVENLIKLAANDNEVTRIFVNPAIKKQLCLDAGADRTWLHKVRPWFGHRAHMHVRLRCPADSLECLDQDTPPPGDGCGAELESWFQPHQPSAKPGKTLPPPLPPSCQALLDNHFAAE.

A signal peptide spans 1–19 (MKKWIAGLLALIAISPVMA). Intrachain disulfides connect Cys-44–Cys-264, Cys-187–Cys-235, and Cys-216–Cys-223. Positions 110, 113, 120, 147, and 211 each coordinate Zn(2+). A disordered region spans residues 234 to 262 (GCGAELESWFQPHQPSAKPGKTLPPPLPP).

Belongs to the peptidase M74 family. In terms of assembly, dimer. Zn(2+) is required as a cofactor.

The protein resides in the periplasm. Functionally, murein endopeptidase that cleaves the D-alanyl-meso-2,6-diamino-pimelyl amide bond that connects peptidoglycan strands. Likely plays a role in the removal of murein from the sacculus. This Yersinia enterocolitica serotype O:8 / biotype 1B (strain NCTC 13174 / 8081) protein is Penicillin-insensitive murein endopeptidase.